Here is a 328-residue protein sequence, read N- to C-terminus: MVDRGLLYREWKQNQVVILLSIAFLVLANPLSIVNTYLSYQGCLDRQDPQYCDFIVNYSISNLIDINWVPGVILAVCFLGMERSKGTMDFILSLPYNRSQIFQTKFWLGGFVIVLSQLIGFLLAWLLILVYNPEHVYFFEHSSIGVIVISFMAFSLVMAAGALTGNAFAQLLTAFSAAILPYLIIALPVGNLEVVFGANIWEIFPSPESYFSLASNLSNLVPISYVVNEWLINSKYLLLIPAVMSMLFYLIGFISFKKLPSERNGHFFLWNRLDRPVQILVMAFGILGFGLFGYYTGHSIIGYILGMIIGAVAGFFVSYFSIYKKTKV.

The next 8 membrane-spanning stretches (helical) occupy residues 16 to 36 (VVILLSIAFLVLANPLSIVNT), 60 to 80 (ISNLIDINWVPGVILAVCFLG), 110 to 130 (GFVIVLSQLIGFLLAWLLILV), 144 to 164 (IGVIVISFMAFSLVMAAGALT), 167 to 187 (AFAQLLTAFSAAILPYLIIAL), 236 to 256 (YLLLIPAVMSMLFYLIGFISF), 277 to 297 (VQILVMAFGILGFGLFGYYTG), and 300 to 320 (IIGYILGMIIGAVAGFFVSYF).

It belongs to the ABC-5 integral membrane protein family. The complex is composed of 2 ATP-binding proteins (YtrB and YtrE), 2 transmembrane proteins (YtrC and YtrD) and a solute-binding protein (YtrF).

It localises to the cell membrane. Functionally, part of the ABC transporter complex YtrBCDEF that plays a role in acetoin utilization during stationary phase and sporulation. The polypeptide is Probable ABC transporter permease YtrC (ytrC) (Bacillus subtilis (strain 168)).